A 226-amino-acid polypeptide reads, in one-letter code: Leucyl/phenylalanyl-tRNA--protein transferase (226 aa).

This sequence belongs to the L/F-transferase family.

The protein resides in the cytoplasm. It carries out the reaction N-terminal L-lysyl-[protein] + L-leucyl-tRNA(Leu) = N-terminal L-leucyl-L-lysyl-[protein] + tRNA(Leu) + H(+). It catalyses the reaction N-terminal L-arginyl-[protein] + L-leucyl-tRNA(Leu) = N-terminal L-leucyl-L-arginyl-[protein] + tRNA(Leu) + H(+). The catalysed reaction is L-phenylalanyl-tRNA(Phe) + an N-terminal L-alpha-aminoacyl-[protein] = an N-terminal L-phenylalanyl-L-alpha-aminoacyl-[protein] + tRNA(Phe). Functions in the N-end rule pathway of protein degradation where it conjugates Leu, Phe and, less efficiently, Met from aminoacyl-tRNAs to the N-termini of proteins containing an N-terminal arginine or lysine. This Pseudomonas aeruginosa (strain LESB58) protein is Leucyl/phenylalanyl-tRNA--protein transferase.